Reading from the N-terminus, the 775-residue chain is 5-methyltetrahydropteroyltriglutamate--homocysteine methyltransferase (775 aa).

Residues 16–19 and Lys115 each bind 5-methyltetrahydropteroyltri-L-glutamate; that span reads REMK. L-homocysteine contacts are provided by residues 435–437 and Glu488; that span reads IGS. L-methionine contacts are provided by residues 435–437 and Glu488; that span reads IGS. 5-methyltetrahydropteroyltri-L-glutamate-binding positions include 519-520 and Trp565; that span reads RC. An L-homocysteine-binding site is contributed by Asp603. Asp603 serves as a coordination point for L-methionine. Glu609 is a binding site for 5-methyltetrahydropteroyltri-L-glutamate. Residues His645, Cys647, and Glu669 each contribute to the Zn(2+) site. Catalysis depends on His698, which acts as the Proton donor. Residue Cys730 participates in Zn(2+) binding.

Belongs to the vitamin-B12 independent methionine synthase family. It depends on Zn(2+) as a cofactor.

It carries out the reaction 5-methyltetrahydropteroyltri-L-glutamate + L-homocysteine = tetrahydropteroyltri-L-glutamate + L-methionine. The protein operates within amino-acid biosynthesis; L-methionine biosynthesis via de novo pathway; L-methionine from L-homocysteine (MetE route): step 1/1. Functionally, catalyzes the transfer of a methyl group from 5-methyltetrahydrofolate to homocysteine resulting in methionine formation. This is 5-methyltetrahydropteroyltriglutamate--homocysteine methyltransferase from Coxiella burnetii (strain Dugway 5J108-111).